The following is a 309-amino-acid chain: Elongation factor Ts (309 aa).

An involved in Mg(2+) ion dislocation from EF-Tu region spans residues 82-85 (TDFV).

Belongs to the EF-Ts family.

The protein localises to the cytoplasm. Functionally, associates with the EF-Tu.GDP complex and induces the exchange of GDP to GTP. It remains bound to the aminoacyl-tRNA.EF-Tu.GTP complex up to the GTP hydrolysis stage on the ribosome. The protein is Elongation factor Ts of Rickettsia typhi (strain ATCC VR-144 / Wilmington).